The sequence spans 608 residues: AAA ATPase forming ring-shaped complexes (608 aa).

The stretch at 45–79 (AQEYDAVLRRLSAAEATRDNMSRQIRGAGEKNRKL) forms a coiled coil. An ATP-binding site is contributed by 302 to 307 (GNGKTM).

Belongs to the AAA ATPase family. In terms of assembly, homohexamer. Assembles into a hexameric ring structure.

The chain is AAA ATPase forming ring-shaped complexes from Rothia mucilaginosa (strain DY-18) (Stomatococcus mucilaginosus).